Reading from the N-terminus, the 527-residue chain is Peptide chain release factor 3 (527 aa).

The 270-residue stretch at 9-278 (DIRRTFAIIS…GLTQWAPKPQ (270 aa)) folds into the tr-type G domain. GTP contacts are provided by residues 18–25 (SHPDAGKT), 86–90 (DTPGH), and 140–143 (NKCD).

Belongs to the TRAFAC class translation factor GTPase superfamily. Classic translation factor GTPase family. PrfC subfamily.

The protein localises to the cytoplasm. Functionally, increases the formation of ribosomal termination complexes and stimulates activities of RF-1 and RF-2. It binds guanine nucleotides and has strong preference for UGA stop codons. It may interact directly with the ribosome. The stimulation of RF-1 and RF-2 is significantly reduced by GTP and GDP, but not by GMP. This chain is Peptide chain release factor 3, found in Shewanella denitrificans (strain OS217 / ATCC BAA-1090 / DSM 15013).